Consider the following 628-residue polypeptide: Dual specificity testis-specific protein kinase 1 (628 aa).

A disordered region spans residues 1–35 (MAGERPPLRGPGPGETPVEGPGGAGGGPGRGRPSS). The span at 20–30 (GPGGAGGGPGR) shows a compositional bias: gly residues. The 259-residue stretch at 52–310 (FDCAEKIGAG…EITQHLEQIL (259 aa)) folds into the Protein kinase domain. ATP is bound by residues 58 to 66 (IGAGFFSEV) and Lys-81. The Proton acceptor role is filled by Asp-170. Ser-215 bears the Phosphoserine; by autocatalysis mark. Disordered stretches follow at residues 330 to 376 (TYNQ…DNLT), 424 to 490 (PESL…QLPL), and 538 to 568 (RAQHSLPRAAALERTEPSPPPSAPREQEEGL). At Arg-338 the chain carries Omega-N-methylarginine. Residues 348–357 (SDPRLSRSRS) are compositionally biased toward basic and acidic residues. The segment at 421–526 (VASPESLVQP…NNNPPAVVVN (106 aa)) is required for interaction with YWHAB. The residue at position 439 (Ser-439) is a Phosphoserine. Residues 478-487 (EPEPPGPAPQ) are compositionally biased toward pro residues. The segment at 529–626 (QGWAREPWNR…PTPSLQLPGA (98 aa)) is required for interaction with PARVA. The interval 529–628 (QGWAREPWNR…PSLQLPGARS (100 aa)) is required for interaction with SPRED1 and SPRY2. Required for TESK1-mediated dephosphorylation of SPRY2 and SPRY2 inhibition of ERK phosphorylation.

This sequence belongs to the protein kinase superfamily. TKL Ser/Thr protein kinase family. As to quaternary structure, interacts (via both C- and N-termini) with SPRY4 (via C-terminus); the interaction inhibits TESK1 kinase activity. Interacts with TAOK1; the interaction inhibits TAOK1 kinase activity. Interacts (via C-terminus) with SPRED1 (via C-terminus); the interaction inhibits TESK1 kinase activity. Interacts (via C-terminus) with PARVA/PARVIN (via C-terminus); the interaction inhibits TESK1 kinase activity. Interacts with YWHAB/14-3-3 beta; the interaction is dependent on the phosphorylation of TESK1 Ser-439 and inhibits TESK1 kinase activity. Interacts with SPRY1, SPRY3 and SPRED2. Interacts (via C-terminus) with SPRY2 (via C-terminus); the interaction disrupts SPRY2 interaction with PPP2CA/PP2A-C, possibly by vesicular sequestration of SPRY2. Therefore dephosphorylation of SPRY2 by the serine/threonine-protein phosphatase 2A (PP2A) holoenzyme is lost, inhibiting its interaction with GRB2. Mg(2+) serves as cofactor. Requires Mn(2+) as cofactor. Autophosphorylated on serine and tyrosine residues. Weakly expressed in sciatic nerves (at protein level). Highly expressed in testicular germ cells. Expressed at low levels in brain, lung, heart, liver and kidney.

It is found in the cytoplasm. The protein resides in the perinuclear region. It localises to the cytoskeleton. Its subcellular location is the microtubule organizing center. The protein localises to the centrosome. It is found in the cell projection. The protein resides in the lamellipodium. It carries out the reaction L-seryl-[protein] + ATP = O-phospho-L-seryl-[protein] + ADP + H(+). The catalysed reaction is L-threonyl-[protein] + ATP = O-phospho-L-threonyl-[protein] + ADP + H(+). The enzyme catalyses L-tyrosyl-[protein] + ATP = O-phospho-L-tyrosyl-[protein] + ADP + H(+). Activated by autophosphorylation on Ser-215. Kinase activity is inhibited by SPRED1. Its function is as follows. Dual specificity protein kinase activity catalyzing autophosphorylation and phosphorylation of exogenous substrates on both serine/threonine and tyrosine residues. Regulates the cellular cytoskeleton by enhancing actin stress fiber formation via phosphorylation of cofilin and by preventing microtubule breakdown via inhibition of TAOK1/MARKK kinase activity. Inhibits podocyte motility via regulation of actin cytoskeletal dynamics and phosphorylation of CFL1. Positively regulates integrin-mediated cell spreading, via phosphorylation of cofilin. Suppresses ciliogenesis via multiple pathways; phosphorylation of CFL1, suppression of ciliary vesicle directional trafficking to the ciliary base, and by facilitating YAP1 nuclear localization where it acts as a transcriptional corepressor of the TEAD4 target genes AURKA and PLK1. Probably plays a central role at and after the meiotic phase of spermatogenesis. In Rattus norvegicus (Rat), this protein is Dual specificity testis-specific protein kinase 1 (Tesk1).